Here is a 286-residue protein sequence, read N- to C-terminus: 2-hydroxy-6-oxononadienedioate/2-hydroxy-6-oxononatrienedioate hydrolase 2 (286 aa).

His266 acts as the Proton acceptor in catalysis.

It belongs to the AB hydrolase superfamily. MhpC family. In terms of assembly, homodimer.

The catalysed reaction is (2Z,4E)-2-hydroxy-6-oxonona-2,4-dienedioate + H2O = (2Z)-2-hydroxypenta-2,4-dienoate + succinate + H(+). It carries out the reaction (2Z,4E,7E)-2-hydroxy-6-oxonona-2,4,7-trienedioate + H2O = (2Z)-2-hydroxypenta-2,4-dienoate + fumarate + H(+). It participates in aromatic compound metabolism; 3-phenylpropanoate degradation. Catalyzes the cleavage of the C5-C6 bond of 2-hydroxy-6-oxononadienedioate and 2-hydroxy-6-oxononatrienedioate, a dienol ring fission product of the bacterial meta-cleavage pathway for degradation of phenylpropionic acid. The protein is 2-hydroxy-6-oxononadienedioate/2-hydroxy-6-oxononatrienedioate hydrolase 2 of Pseudomonas putida (Arthrobacter siderocapsulatus).